We begin with the raw amino-acid sequence, 339 residues long: N-acetylmuramate/N-acetylglucosamine kinase (339 aa).

This sequence belongs to the kinase AmgK family.

It catalyses the reaction N-acetyl-D-muramate + ATP = N-acetyl-alpha-D-muramate 1-phosphate + ADP + H(+). The enzyme catalyses N-acetyl-D-glucosamine + ATP = N-acetyl-alpha-D-glucosamine 1-phosphate + ADP + H(+). It participates in cell wall biogenesis; peptidoglycan recycling. In terms of biological role, sugar kinase that catalyzes the ATP-dependent phosphorylation of N-acetylmuramate (MurNAc) and N-acetylglucosamine (GlcNAc) at its C1 hydroxyl group, leading to MurNAc alpha-1P and GlcNAc alpha-1P, respectively. Is involved in peptidoglycan recycling as part of a cell wall recycling pathway that bypasses de novo biosynthesis of the peptidoglycan precursor UDP-MurNAc. Plays a role in intrinsic resistance to fosfomycin, which targets the de novo synthesis of UDP-MurNAc. Is also able to use N-acetylgalactosamine (GalNAc) as a substrate, but not N-acetylmannosamine, N-deacetylated sugars or glucose. The chain is N-acetylmuramate/N-acetylglucosamine kinase from Pseudomonas putida (strain ATCC 47054 / DSM 6125 / CFBP 8728 / NCIMB 11950 / KT2440).